The chain runs to 435 residues: Eukaryotic peptide chain release factor subunit 1-3 (435 aa).

Ala2 is subject to N-acetylalanine.

The protein belongs to the eukaryotic release factor 1 family. Heterodimer of two subunits, one of which binds GTP.

The protein resides in the cytoplasm. In terms of biological role, directs the termination of nascent peptide synthesis (translation) in response to the termination codons UAA, UAG and UGA. Modulates plant growth and development. The sequence is that of Eukaryotic peptide chain release factor subunit 1-3 (ERF1-3) from Arabidopsis thaliana (Mouse-ear cress).